Consider the following 358-residue polypeptide: MININDRALIKKAIDKINKLAEKIDKLKIMHVCGSHEHTICKYGIRDVLPENITVVPGPGCPVCVTTQKEIDTAIYLADNGYVITTLGDMYRVPGSEKSLMEKQSEGCDVRIVYSISEAVKMAKKERDKKFVFVAIGFETTAPTTGAELISLKNKDVNNFFILNCHRQTPPVMEFLLNEGVYLDAFICPGHVSTITGLKPYYGLCEKYKAPMVVAGFEPIDVLMAIIMILKQVISGEAKVENEYIRAVKPEGNVLAQKIINEVFESIDVPWRGFPVVKNGGFGLREKYKKFDIYEHEDIPEIKEKIPKGCICDKILRGEKLPTDCPLFGTVCTPLNPVGSCMVSDEGTCRIFYKYRRI.

3 residues coordinate Fe cation: Cys33, Cys61, and Cys64.

Belongs to the HypD family.

In Methanocaldococcus jannaschii (strain ATCC 43067 / DSM 2661 / JAL-1 / JCM 10045 / NBRC 100440) (Methanococcus jannaschii), this protein is Putative hydrogenase expression/formation protein MJ0993.